A 262-amino-acid polypeptide reads, in one-letter code: Diaminopimelate epimerase (262 aa).

Substrate is bound by residues asparagine 17, glutamine 45, and asparagine 63. The active-site Proton donor is cysteine 72. Residues 73 to 74 (GN), asparagine 154, asparagine 187, and 205 to 206 (ER) each bind substrate. Cysteine 214 acts as the Proton acceptor in catalysis. Position 215–216 (215–216 (GS)) interacts with substrate.

Belongs to the diaminopimelate epimerase family. In terms of assembly, homodimer.

It localises to the cytoplasm. The enzyme catalyses (2S,6S)-2,6-diaminopimelate = meso-2,6-diaminopimelate. It functions in the pathway amino-acid biosynthesis; L-lysine biosynthesis via DAP pathway; DL-2,6-diaminopimelate from LL-2,6-diaminopimelate: step 1/1. Catalyzes the stereoinversion of LL-2,6-diaminopimelate (L,L-DAP) to meso-diaminopimelate (meso-DAP), a precursor of L-lysine and an essential component of the bacterial peptidoglycan. The sequence is that of Diaminopimelate epimerase from Wolbachia sp. subsp. Drosophila simulans (strain wRi).